The sequence spans 187 residues: Inner membrane-spanning protein YciB (187 aa).

5 consecutive transmembrane segments (helical) span residues 25-45, 50-70, 76-96, 118-138, and 148-168; these read ATGA…ALYK, MQLI…FLHD, WKVT…HVMG, INWA…YVAY, and FKVF…GGYI.

The protein belongs to the YciB family.

It localises to the cell inner membrane. Plays a role in cell envelope biogenesis, maintenance of cell envelope integrity and membrane homeostasis. The protein is Inner membrane-spanning protein YciB of Vibrio vulnificus (strain CMCP6).